The chain runs to 48 residues: uncharacterized protein (48 aa).

The chain crosses the membrane as a helical span at residues 6 to 26 (IILLMIVCLVVSVLVVVWIIL).

It is found in the host membrane. This is an uncharacterized protein from Spiroplasma melliferum (SpV4).